The sequence spans 309 residues: Mycothiol acetyltransferase (309 aa).

N-acetyltransferase domains follow at residues 16–158 and 166–309; these read ETLA…LDLP and VSVR…RTET. 1D-myo-inositol 2-(L-cysteinylamino)-2-deoxy-alpha-D-glucopyranoside is bound at residue E47. Residue 92 to 94 participates in acetyl-CoA binding; sequence LVV. 1D-myo-inositol 2-(L-cysteinylamino)-2-deoxy-alpha-D-glucopyranoside-binding residues include E193, K232, and E241. Acetyl-CoA contacts are provided by residues 245–247 and 252–258; these read LGI and QGGGLGK. Residue Y279 participates in 1D-myo-inositol 2-(L-cysteinylamino)-2-deoxy-alpha-D-glucopyranoside binding.

It belongs to the acetyltransferase family. MshD subfamily. In terms of assembly, monomer.

The enzyme catalyses 1D-myo-inositol 2-(L-cysteinylamino)-2-deoxy-alpha-D-glucopyranoside + acetyl-CoA = mycothiol + CoA + H(+). Catalyzes the transfer of acetyl from acetyl-CoA to desacetylmycothiol (Cys-GlcN-Ins) to form mycothiol. This Streptomyces coelicolor (strain ATCC BAA-471 / A3(2) / M145) protein is Mycothiol acetyltransferase.